The sequence spans 271 residues: Mannosyl-3-phosphoglycerate phosphatase (271 aa).

Catalysis depends on Asp-13, which acts as the Nucleophile. The Mg(2+) site is built by Asp-13, Asp-15, and Asp-214.

It belongs to the HAD-like hydrolase superfamily. MPGP family. Mg(2+) is required as a cofactor.

The protein resides in the cytoplasm. It catalyses the reaction 2-O-(alpha-D-mannosyl)-3-phosphoglycerate + H2O = (2R)-2-O-(alpha-D-mannosyl)-glycerate + phosphate. The protein is Mannosyl-3-phosphoglycerate phosphatase (yedP) of Shigella dysenteriae serotype 1 (strain Sd197).